A 353-amino-acid chain; its full sequence is Quinolinate synthase (353 aa).

His-49 and Ser-70 together coordinate iminosuccinate. Position 115 (Cys-115) interacts with [4Fe-4S] cluster. Iminosuccinate is bound by residues 141–143 (YAN) and Ser-158. Residue Cys-202 coordinates [4Fe-4S] cluster. Residues 228–230 (HPE) and Thr-245 each bind iminosuccinate. Cys-299 contributes to the [4Fe-4S] cluster binding site.

Belongs to the quinolinate synthase family. Type 1 subfamily. [4Fe-4S] cluster is required as a cofactor.

The protein localises to the cytoplasm. It catalyses the reaction iminosuccinate + dihydroxyacetone phosphate = quinolinate + phosphate + 2 H2O + H(+). Its pathway is cofactor biosynthesis; NAD(+) biosynthesis; quinolinate from iminoaspartate: step 1/1. Functionally, catalyzes the condensation of iminoaspartate with dihydroxyacetone phosphate to form quinolinate. The polypeptide is Quinolinate synthase (Marinobacter nauticus (strain ATCC 700491 / DSM 11845 / VT8) (Marinobacter aquaeolei)).